Here is a 682-residue protein sequence, read N- to C-terminus: Polyadenylate-binding protein 5 (682 aa).

RRM domains are found at residues 59-136 (SSLY…LSNR), 146-223 (GNVF…HFVR), 239-316 (TNVY…RAQK), and 342-419 (SNLY…LAQR). In terms of domain architecture, PABC spans 588–665 (TISKLASDLA…ALDVLRRSAD (78 aa)). Ser600 is subject to Phosphoserine.

Belongs to the polyadenylate-binding protein type-1 family. Expressed predominantly in immature flowers but also at lower levels in mature flowers and siliques. Detected in tapetum, pollen, ovules and developing seeds. Also detected in primary inflorescences and immature siliques.

The protein resides in the cytoplasm. It is found in the nucleus. Functionally, binds the poly(A) tail of mRNA. Appears to be an important mediator of the multiple roles of the poly(A) tail in mRNA biogenesis, stability and translation. In Arabidopsis thaliana (Mouse-ear cress), this protein is Polyadenylate-binding protein 5 (PAB5).